The following is a 435-amino-acid chain: Asparagine--tRNA ligase (435 aa).

Belongs to the class-II aminoacyl-tRNA synthetase family. As to quaternary structure, homodimer.

Its subcellular location is the cytoplasm. It carries out the reaction tRNA(Asn) + L-asparagine + ATP = L-asparaginyl-tRNA(Asn) + AMP + diphosphate + H(+). This chain is Asparagine--tRNA ligase, found in Leptospira interrogans serogroup Icterohaemorrhagiae serovar copenhageni (strain Fiocruz L1-130).